The sequence spans 248 residues: PF03932 family protein CutC (248 aa).

This sequence belongs to the CutC family. Homodimer.

The protein resides in the cytoplasm. This chain is PF03932 family protein CutC, found in Salmonella enteritidis PT4 (strain P125109).